The following is a 296-amino-acid chain: tRNA dimethylallyltransferase (296 aa).

9-16 (GTTASGKS) contacts ATP. Residue 11–16 (TASGKS) participates in substrate binding. Positions 34-37 (DSLA) are interaction with substrate tRNA.

The protein belongs to the IPP transferase family. As to quaternary structure, monomer. It depends on Mg(2+) as a cofactor.

The enzyme catalyses adenosine(37) in tRNA + dimethylallyl diphosphate = N(6)-dimethylallyladenosine(37) in tRNA + diphosphate. Catalyzes the transfer of a dimethylallyl group onto the adenine at position 37 in tRNAs that read codons beginning with uridine, leading to the formation of N6-(dimethylallyl)adenosine (i(6)A). This is tRNA dimethylallyltransferase from Campylobacter curvus (strain 525.92).